An 805-amino-acid chain; its full sequence is Chloride channel protein (805 aa).

Topologically, residues 1–48 (MSHEKNEASGYPEAQSWKSQEAMLGARTEVSRWRAVKNCLYRHLVKVL) are cytoplasmic. 2 helical membrane passes run 49–86 (GEDWIFLLLLGALMALVSWAMDFIGSRGLRFYKYLFAL) and 93–116 (LQYLVWVCYPLALILFSSLFCQIV). The Selectivity filter part_1 motif lies at 122 to 126 (GSGIP). Ser123 contacts chloride. An intramembrane region (helical) is located at residues 125–132 (IPELKTII). Transmembrane regions (helical) follow at residues 141–159 (LTLRTFVAKTVGLTVALSA) and 166–184 (EGPFVHIASICATLLNQLL). A Selectivity filter part_2 motif is present at residues 164 to 168 (GKEGP). Intramembrane regions (helical) lie at residues 201-213 (ILTVGCALGISCC) and 217-225 (PLAGVLFSI). The next 3 helical transmembrane spans lie at 237–256 (YWRGFLGGAFSAFIFRVLSV), 283–311 (MPAFAIIGIASGFFGALFVYLNRQIIVFM), and 320–339 (ILKKQRLIYPAVVTFVLATL). N-linked (GlcNAc...) asparagine glycosylation is present at Asn365. A run of 2 helical transmembrane segments spans residues 388 to 408 (LNIFIVMALYFVMHFWMAALA) and 416 to 439 (GAFVPVFNLGAVLGRFVGELMALL). A Selectivity filter part_3 motif is present at residues 416-420 (GAFVP). Phe418 is a chloride binding site. Residues 456–470 (GEYAVIGAAAMTGAV) constitute an intramembrane region (helical). The note=Loop between two helices intramembrane region spans 471 to 472 (TH). Residues 473–484 (AVSTAVICFELT) constitute an intramembrane region (helical). Positions 485-489 (GQISH) form an intramembrane region, note=Loop between two helices. Residues 490 to 507 (VLPMMVAVILANMVAQGL) traverse the membrane as a helical segment. The Cytoplasmic portion of the chain corresponds to 508–805 (QPSLYDSIIQ…RTATSNSSGK (298 aa)). Tyr512 serves as a coordination point for chloride. Residues 543-601 (MVRDVTSIASTSTYGDLLHVLRQTKLKFFPFVDTPDTNTLLGSIDRTEVEGLLQRRISA) enclose the CBS 1 domain. Disordered regions lie at residues 606–625 (PAAAAEADEEGRNGETGASF) and 653–684 (KVQTEDPRPPSPVPAEEPTQTSGIYQKKQKGT). The 58-residue stretch at 719 to 776 (IDQSPFQLVEGTSLQKTHTLFSLLGLDRAYVTSMGKLVGVVALAEIQAAIEGSYQKGF) folds into the CBS 2 domain.

This sequence belongs to the chloride channel (TC 2.A.49) family. ClC-0 subfamily. As to quaternary structure, homodimer. Each subunit contains a channel ('Double barreled channel').

It is found in the membrane. Voltage-gated chloride channel. This channel is thought to ensure the high conductance of the non-innervated membrane of the electrocyte necessary for efficient current generation caused by sodium influx through the acetylcholine receptor at the innervated membrane. This is Chloride channel protein from Torpedo marmorata (Marbled electric ray).